The following is a 490-amino-acid chain: Alginate production protein AlgE (490 aa).

The first 32 residues, 1–32, serve as a signal peptide directing secretion; it reads MNSSRSVNPRPSFAPRALSLAIALLLGAPAFA. 2 stretches are compositionally biased toward polar residues: residues 102–115 and 343–355; these read DTLQ…NNSR and QFQQ…NRSN. Disordered stretches follow at residues 102–121 and 331–355; these read DTLQ…GREP and ARGS…NRSN.

This sequence belongs to the AlgE family.

The protein localises to the cell outer membrane. It participates in glycan biosynthesis; alginate biosynthesis. Functionally, has non-porin-like, channel-forming properties and probably functions as an alginate permeability pore. In Pseudomonas aeruginosa (strain ATCC 15692 / DSM 22644 / CIP 104116 / JCM 14847 / LMG 12228 / 1C / PRS 101 / PAO1), this protein is Alginate production protein AlgE (algE).